A 237-amino-acid chain; its full sequence is Phosphoribosylaminoimidazole-succinocarboxamide synthase (237 aa).

This sequence belongs to the SAICAR synthetase family.

It catalyses the reaction 5-amino-1-(5-phospho-D-ribosyl)imidazole-4-carboxylate + L-aspartate + ATP = (2S)-2-[5-amino-1-(5-phospho-beta-D-ribosyl)imidazole-4-carboxamido]succinate + ADP + phosphate + 2 H(+). The protein operates within purine metabolism; IMP biosynthesis via de novo pathway; 5-amino-1-(5-phospho-D-ribosyl)imidazole-4-carboxamide from 5-amino-1-(5-phospho-D-ribosyl)imidazole-4-carboxylate: step 1/2. This is Phosphoribosylaminoimidazole-succinocarboxamide synthase from Citrobacter koseri (strain ATCC BAA-895 / CDC 4225-83 / SGSC4696).